We begin with the raw amino-acid sequence, 148 residues long: uncharacterized protein (148 aa).

Positions 1–35 (MRCVTRTRNWWRRAARMPRAGSSAWWVAVCKQVCT) are cleaved as a signal peptide.

The protein localises to the secreted. This is an uncharacterized protein from Homo sapiens (Human).